The following is a 128-amino-acid chain: Cytochrome c-type biogenesis protein CcmE (128 aa).

Residues 1–8 are Cytoplasmic-facing; the sequence is MQKRVRNR. Residues 9 to 29 form a helical; Signal-anchor for type II membrane protein membrane-spanning segment; the sequence is LITIIICFCSAFLGIGIILYN. Topologically, residues 30 to 128 are periplasmic; that stretch reads LENNIVFFLP…KHDENYRPTR (99 aa). Heme is bound by residues His120 and Tyr124.

It belongs to the CcmE/CycJ family.

The protein localises to the cell inner membrane. In terms of biological role, heme chaperone required for the biogenesis of c-type cytochromes. Transiently binds heme delivered by CcmC and transfers the heme to apo-cytochromes in a process facilitated by CcmF and CcmH. The polypeptide is Cytochrome c-type biogenesis protein CcmE (Rickettsia canadensis (strain McKiel)).